Reading from the N-terminus, the 20-residue chain is Collagenolytic protease 28 kDa (20 aa).

Residues 1-20 form the Peptidase S1 domain; that stretch reads IVGGQEASPGSWPXQVGLFF.

The protein belongs to the peptidase S1 family.

The enzyme catalyses Hydrolysis of proteins, with broad specificity for peptide bonds. Native collagen is cleaved about 75% of the length of the molecule from the N-terminus. Low activity on small molecule substrates of both trypsin and chymotrypsin.. This enzyme is a serine protease capable of degrading the native triple helix of collagen. The chain is Collagenolytic protease 28 kDa from Paralithodes camtschaticus (Red king crab).